Here is a 1003-residue protein sequence, read N- to C-terminus: Glutamate receptor ionotropic, NMDA 3B (1003 aa).

An N-terminal signal peptide occupies residues 1–24; that stretch reads MECVQTLWLSLALALARGSWVVRG. Residues 25–574 lie on the Extracellular side of the membrane; sequence HPQPCGVPTR…PIGAFMWPLH (550 aa). N-linked (GlcNAc...) asparagine glycosylation is found at Asn69, Asn212, Asn344, Asn451, and Asn465. Disulfide bonds link Cys439–Cys475 and Cys445–Cys476. Residues Ser531, Ser533, and Arg538 each coordinate glycine. Ser533 and Arg538 together coordinate D-serine. A helical membrane pass occupies residues 575–594; the sequence is WSMWVGVFAALHLTALFLTL. Residues 595-615 are Cytoplasmic-facing; that stretch reads YEWRSPYGLTPRGRNRGTVFS. Residues 616–627 constitute an intramembrane region (discontinuously helical); it reads YSSALNLCYAIL. The Cytoplasmic segment spans residues 628–641; it reads FGRTVSSKTPKCPT. The chain crosses the membrane as a helical span at residues 642 to 661; the sequence is GRFLMNLWAIFCLLVLSSYT. Topologically, residues 662–832 are extracellular; it reads ANLAAVMVGD…TLQMGVYHLS (171 aa). Ser701 is a glycine binding site. Residues Ser701, Ala702, and Asp745 each contribute to the D-serine site. Asp745 provides a ligand contact to glycine. A glycan (N-linked (GlcNAc...) asparagine) is linked at Asn786. A helical membrane pass occupies residues 833 to 848; sequence GLFVLLCLGLGSALLT. Topologically, residues 849 to 1003 are cytoplasmic; that stretch reads SLGEHVFYRL…RLLHAAPAES (155 aa). The segment at 883–912 is disordered; sequence LNTGPPEGQQERAEQECSGPKEEQPAADGA. Residues 891–906 show a composition bias toward basic and acidic residues; sequence QQERAEQECSGPKEEQ. Residues 947 to 986 are a coiled coil; that stretch reads SNGPGVQAELRELELRIEAARERLRSALLRRGELRAQLGD. The interval 952-985 is involved in the trafficking and surface expression of NMDARs; it reads VQAELRELELRIEAARERLRSALLRRGELRAQLG.

It belongs to the glutamate-gated ion channel (TC 1.A.10.1) family. NR3B/GRIN3B subfamily. Forms heterotetrameric channels that contain at least two GluN1 subunits and at least a combination of one GluN2 and one GluN3 subunits (in vitro). Forms heterotetrameric channels composed of two GluN1/zeta subunits (GRIN1), and two identical GluN3 subunits (GRIN3A or GRIN3B) (in vitro). Does not form functional homomeric channels. As to expression, expressed in the facial nucleus and the ambiguus nucleus of the brainstem, pons, medulla, spinal cord and cerebellum.

The protein localises to the cell membrane. It is found in the postsynaptic cell membrane. The catalysed reaction is Ca(2+)(in) = Ca(2+)(out). The enzyme catalyses Na(+)(in) = Na(+)(out). Functionally, component of a non-conventional N-methyl-D-aspartate (NMDA) receptors (NMDARs) that function as heterotetrameric, ligand-gated cation channels with low calcium permeability and low voltage-dependent block by Mg(2+). Forms glutamatergic receptor complexes with GluN1 and GluN2 subunits which are activated by glycine binding to the GluN1 and GluN3 subunits and L-glutamate binding to GluN2 subunits. Forms excitatory glycinergic receptor complexes with GluN1 alone which are activated by glycine binding to the GluN1 and GluN3 subunits. GluN3B subunit also binds D-serine and, in the absence of glycine, activates glycinergic receptor complexes, but with lower efficacy than glycine. Each GluN3 subunit confers differential attributes to channel properties, including activation, deactivation and desensitization kinetics, pH sensitivity, Ca2(+) permeability, and binding to allosteric modulators. In Mus musculus (Mouse), this protein is Glutamate receptor ionotropic, NMDA 3B.